The chain runs to 568 residues: Proline--tRNA ligase (568 aa).

The protein belongs to the class-II aminoacyl-tRNA synthetase family. ProS type 1 subfamily. In terms of assembly, homodimer.

The protein resides in the cytoplasm. It catalyses the reaction tRNA(Pro) + L-proline + ATP = L-prolyl-tRNA(Pro) + AMP + diphosphate. In terms of biological role, catalyzes the attachment of proline to tRNA(Pro) in a two-step reaction: proline is first activated by ATP to form Pro-AMP and then transferred to the acceptor end of tRNA(Pro). As ProRS can inadvertently accommodate and process non-cognate amino acids such as alanine and cysteine, to avoid such errors it has two additional distinct editing activities against alanine. One activity is designated as 'pretransfer' editing and involves the tRNA(Pro)-independent hydrolysis of activated Ala-AMP. The other activity is designated 'posttransfer' editing and involves deacylation of mischarged Ala-tRNA(Pro). The misacylated Cys-tRNA(Pro) is not edited by ProRS. This Alkalilimnicola ehrlichii (strain ATCC BAA-1101 / DSM 17681 / MLHE-1) protein is Proline--tRNA ligase.